The primary structure comprises 198 residues: Ribonuclease 3-like protein 1 (198 aa).

Basic and acidic residues predominate over residues 85-110 (KKLAPKPDEEHTTTTKPISKDDESKT). Residues 85–115 (KKLAPKPDEEHTTTTKPISKDDESKTRRGSA) are disordered. A DRBM domain is found at 114-191 (SAKSVLHEMC…AEGALWYLEH (78 aa)).

The polypeptide is Ribonuclease 3-like protein 1 (RTL1) (Arabidopsis thaliana (Mouse-ear cress)).